Reading from the N-terminus, the 326-residue chain is MASATNLADNIVVVECSNGWEARAEADGRLLVLINNHTVELSAGLGSAGEFYSVLTDVGVRVACSSGYAIVLAQISGLPHVGREPGNFSNITFTGNLANYYTAYGIVDSGYRGVVKAVQFANGVNTVVPPGCMSLGLVLVKLSTETINVTNINLTENGRSPRVNIFYDYFAPKRDEDAGYDISAQTNATIEPDESYFVELPIVFSSSNPAVTPCIFGRSSMNRRGLIVLPTRWVTGRTCCFFILNINKYPVYITKGQRVAQLVLTEDIDEALIPTNVNYNTPFPTYSPTGAVKHNPTPILWKFTEAFDHDAPSSARSEGGFGSTGL.

Substrate-binding positions include 218–220 (RSS) and 321–322 (FG).

Belongs to the dUTPase family. The cofactor is Mg(2+).

It carries out the reaction dUTP + H2O = dUMP + diphosphate + H(+). Functionally, involved in nucleotide metabolism: produces dUMP, the immediate precursor of thymidine nucleotides and decreases the intracellular concentration of dUTP to avoid uracil incorporation into viral DNA. The polypeptide is Deoxyuridine 5'-triphosphate nucleotidohydrolase (Equus caballus (Horse)).